We begin with the raw amino-acid sequence, 346 residues long: Methionine import ATP-binding protein MetN 1 (346 aa).

The ABC transporter domain maps to 2 to 241 (IELKNVSKVF…PQHVTTKKFV (240 aa)). 38-45 (GYSGAGKS) lines the ATP pocket.

The protein belongs to the ABC transporter superfamily. Methionine importer (TC 3.A.1.24) family. The complex is composed of two ATP-binding proteins (MetN), two transmembrane proteins (MetI) and a solute-binding protein (MetQ).

The protein localises to the cell membrane. The enzyme catalyses L-methionine(out) + ATP + H2O = L-methionine(in) + ADP + phosphate + H(+). It carries out the reaction D-methionine(out) + ATP + H2O = D-methionine(in) + ADP + phosphate + H(+). Functionally, part of the ABC transporter complex MetNIQ involved in methionine import. Responsible for energy coupling to the transport system. The sequence is that of Methionine import ATP-binding protein MetN 1 from Bacillus cereus (strain ATCC 10987 / NRS 248).